Consider the following 126-residue polypeptide: uncharacterized protein (126 aa).

Positions 1 to 46 (MREEEAAAVVTVPQAGRDGEQPGPPAGLGCAAVRGEPGGGGPQESR) are disordered.

The protein localises to the cytoplasm. It is found in the cytoskeleton. It localises to the cilium basal body. This is an uncharacterized protein from Bos taurus (Bovine).